Here is a 224-residue protein sequence, read N- to C-terminus: Phosphoribosylformylglycinamidine synthase subunit PurQ (224 aa).

In terms of domain architecture, Glutamine amidotransferase type-1 spans 4–224; sequence FGIIVFPGSN…ATDGLAMFIS (221 aa). Residue C87 is the Nucleophile of the active site. Residues H204 and E206 contribute to the active site.

As to quaternary structure, part of the FGAM synthase complex composed of 1 PurL, 1 PurQ and 2 PurS subunits.

The protein localises to the cytoplasm. The enzyme catalyses N(2)-formyl-N(1)-(5-phospho-beta-D-ribosyl)glycinamide + L-glutamine + ATP + H2O = 2-formamido-N(1)-(5-O-phospho-beta-D-ribosyl)acetamidine + L-glutamate + ADP + phosphate + H(+). It catalyses the reaction L-glutamine + H2O = L-glutamate + NH4(+). It participates in purine metabolism; IMP biosynthesis via de novo pathway; 5-amino-1-(5-phospho-D-ribosyl)imidazole from N(2)-formyl-N(1)-(5-phospho-D-ribosyl)glycinamide: step 1/2. In terms of biological role, part of the phosphoribosylformylglycinamidine synthase complex involved in the purines biosynthetic pathway. Catalyzes the ATP-dependent conversion of formylglycinamide ribonucleotide (FGAR) and glutamine to yield formylglycinamidine ribonucleotide (FGAM) and glutamate. The FGAM synthase complex is composed of three subunits. PurQ produces an ammonia molecule by converting glutamine to glutamate. PurL transfers the ammonia molecule to FGAR to form FGAM in an ATP-dependent manner. PurS interacts with PurQ and PurL and is thought to assist in the transfer of the ammonia molecule from PurQ to PurL. The sequence is that of Phosphoribosylformylglycinamidine synthase subunit PurQ from Synechocystis sp. (strain ATCC 27184 / PCC 6803 / Kazusa).